The chain runs to 594 residues: MTETSANKPENTQAHEGRDYSVLERQFNVLRDKLRNVDRQLAAATQNNTKMTTTLQSAKAEILRLKSALEKDGQAPYSFATLVQINPRRTPGQAVSTLSAADQASSATGLAVTEESVDIAYQGRKMRVGLSPLVNIASLSPGQEVLLNESLTVIAGLGFERTGEIVSVKELIGTDRALVTGRADEERVVKLSGALMSQKIRVGDALSADSRSGYALEKVPRSEVENLILEEVPDISYHDIGGLGPQIEQIRDAVELPFLHPDLYREHGLKAPKGILLYGPPGCGKTLIAKAVANSLAARAAERNGLKETKSFFLNIKGPELLDKYVGETERKIRLIFARAREKASDGSAVVVFFDEMDSLFRTRGTGVSSDVETTIVPQLLSEIDGVERLDNVIVIGASNREDMIDPAILRPGRLDVKVKIQRPDAEAAADIFAKYVTVDLPLHQDDLLAHGNSAQATVDAMIQRTVEAMYSTDKSNEYLEVTYANGDSEMLYFKDFNSGAVIQNVVDRAKKYAIKDLLTTGDKGIRVDHMLRAVADEFREHEDMPNTTNPDDWARISDKKGERITYIRTIIQGKAGQEPGKTLETSLNTGQYL.

Residues 1–12 (MTETSANKPENT) are compositionally biased toward polar residues. Residues 1–20 (MTETSANKPENTQAHEGRDY) are disordered. Residues 18–71 (RDYSVLERQFNVLRDKLRNVDRQLAAATQNNTKMTTTLQSAKAEILRLKSALEK) are a coiled coil. Residue 282 to 287 (GCGKTL) participates in ATP binding. Residues 593 to 594 (YL) are docks into pockets in the proteasome alpha-ring.

This sequence belongs to the AAA ATPase family. Homohexamer. Assembles into a hexameric ring structure that caps the 20S proteasome core. Strongly interacts with the prokaryotic ubiquitin-like protein Pup through a hydrophobic interface; the interacting region of ARC lies in its N-terminal coiled-coil domain. There is one Pup binding site per ARC hexamer ring. Upon ATP-binding, the C-terminus of ARC interacts with the alpha-rings of the proteasome core, possibly by binding to the intersubunit pockets.

Its pathway is protein degradation; proteasomal Pup-dependent pathway. Its function is as follows. ATPase which is responsible for recognizing, binding, unfolding and translocation of pupylated proteins into the bacterial 20S proteasome core particle. May be essential for opening the gate of the 20S proteasome via an interaction with its C-terminus, thereby allowing substrate entry and access to the site of proteolysis. Thus, the C-termini of the proteasomal ATPase may function like a 'key in a lock' to induce gate opening and therefore regulate proteolysis. The sequence is that of Proteasome-associated ATPase from Renibacterium salmoninarum (strain ATCC 33209 / DSM 20767 / JCM 11484 / NBRC 15589 / NCIMB 2235).